A 456-amino-acid polypeptide reads, in one-letter code: Cysteine synthase 2 (456 aa).

Residues 9 to 29 traverse the membrane as a helical segment; the sequence is VYGTVALTAAFAAGILVTLGF.

Belongs to the cysteine synthase/cystathionine beta-synthase family. Pyridoxal 5'-phosphate serves as cofactor.

It is found in the mitochondrion outer membrane. It carries out the reaction O-acetyl-L-serine + hydrogen sulfide = L-cysteine + acetate. Functionally, putative cysteine synthase that catalyzes the conversion of O-acetyl-L-serine (OAS) into cysteine, the last step in the cysteine biosynthesis pathway. However, in contrast to cysteine synthase cys-17, this CS-like protein may not function in cysteine biosynthesis. The chain is Cysteine synthase 2 from Neurospora crassa (strain ATCC 24698 / 74-OR23-1A / CBS 708.71 / DSM 1257 / FGSC 987).